The chain runs to 557 residues: Anti-Muellerian hormone type-2 receptor (557 aa).

A signal peptide spans 1-17 (MLGTLGLWTLLPAAAQV). Topologically, residues 18 to 144 (SPNRRTCVFF…QEPQATPGGP (127 aa)) are extracellular. 2 disulfide bridges follow: cysteine 55–cysteine 79 and cysteine 92–cysteine 109. Asparagine 66 carries an N-linked (GlcNAc...) asparagine glycan. Asparagine 119 carries an N-linked (GlcNAc...) asparagine glycan. Residues 145–165 (IWMAQLLLGVFLVLLLSIIIL) form a helical membrane-spanning segment. Over 166-557 (ALLQRKACRV…SVQQGSGSKS (392 aa)) the chain is Cytoplasmic. One can recognise a Protein kinase domain in the interval 201–511 (LRFSQVIQEG…RLAALAYPQV (311 aa)). Residues 207 to 215 (IQEGGHAVV) and lysine 228 each bind ATP. The Proton acceptor role is filled by aspartate 331.

Belongs to the protein kinase superfamily. TKL Ser/Thr protein kinase family. TGFB receptor subfamily. Interacts with type I receptor ACVR1. Requires Mg(2+) as cofactor. Mn(2+) is required as a cofactor.

It localises to the membrane. It carries out the reaction L-threonyl-[receptor-protein] + ATP = O-phospho-L-threonyl-[receptor-protein] + ADP + H(+). It catalyses the reaction L-seryl-[receptor-protein] + ATP = O-phospho-L-seryl-[receptor-protein] + ADP + H(+). Functionally, on ligand binding, forms a receptor complex consisting of two type II and two type I transmembrane serine/threonine kinases. Type II receptors phosphorylate and activate type I receptors which autophosphorylate, then bind and activate SMAD transcriptional regulators. Receptor for anti-Muellerian hormone. The polypeptide is Anti-Muellerian hormone type-2 receptor (Amhr2) (Rattus norvegicus (Rat)).